Reading from the N-terminus, the 367-residue chain is MSGSQTLVVKLGTSVLTGGSRRLNRAHIVELVRQCAQQHAAGHRIVIVTSGAIAAGREHLGYPELPATIATKQLLAAVGQSRLIQLWEQLFSIYGIHVGQMLLTRADMEDRERFLNARDTMRALLDNNIVPVINENDAVATAEIKVGDNDNLSALAAILADADKLLLLTDQAGLFTADPRNNPDAELIREVTGINDALRSIAGDSVSGLGTGGMSTKLQAADVACRAGIDVVIAAGSKPGVIGDVIADISVGTRFHALDTPLESRKHWIFGAPPAGEITVDDGALSAILERGSSLLPKGIRTVEGNFSRGEVIRVRSLAGRDVAHAVTRYNSDALRLIAGHHSQQIAEILGYEYGPVAIHRDDMIIN.

Lysine 10 contacts ATP. Substrate is bound by residues serine 50, aspartate 137, and asparagine 149. ATP is bound by residues 169–170 and 211–217; these read TD and TGGMSTK. The 79-residue stretch at 275–353 folds into the PUA domain; it reads AGEITVDDGA…QQIAEILGYE (79 aa).

It belongs to the glutamate 5-kinase family.

The protein resides in the cytoplasm. It carries out the reaction L-glutamate + ATP = L-glutamyl 5-phosphate + ADP. The protein operates within amino-acid biosynthesis; L-proline biosynthesis; L-glutamate 5-semialdehyde from L-glutamate: step 1/2. Its function is as follows. Catalyzes the transfer of a phosphate group to glutamate to form L-glutamate 5-phosphate. The chain is Glutamate 5-kinase from Pectobacterium atrosepticum (strain SCRI 1043 / ATCC BAA-672) (Erwinia carotovora subsp. atroseptica).